Here is an 86-residue protein sequence, read N- to C-terminus: Anti-adapter protein IraP (86 aa).

The stretch at 1–36 forms a coiled coil; sequence MKNLIAELLLKLAQKEEESKELVAQVEALEIIVTAM.

Belongs to the IraP family. Interacts with RssB.

It localises to the cytoplasm. Inhibits RpoS proteolysis by regulating RssB activity, thereby increasing the stability of the sigma stress factor RpoS especially during phosphate and magnesium starvation, but also in stationary phase and during nitrogen starvation. Its effect on RpoS stability is due to its interaction with RssB, which probably blocks the interaction of RssB with RpoS, and the consequent delivery of the RssB-RpoS complex to the ClpXP protein degradation pathway. This chain is Anti-adapter protein IraP, found in Salmonella choleraesuis (strain SC-B67).